We begin with the raw amino-acid sequence, 342 residues long: Cell division protein ZipA (342 aa).

Over 1-6 (MEDLQL) the chain is Periplasmic. Residues 7 to 27 (VLFILGAIAIVAVLVHGFWSI) form a helical membrane-spanning segment. Residues 28 to 342 (RRQQPKSLKD…DYLHRIRANA (315 aa)) lie on the Cytoplasmic side of the membrane. The segment at 33–57 (KSLKDSPMGNFYKQQADKESPPKRV) is disordered. Residues 47 to 57 (QADKESPPKRV) show a composition bias toward basic and acidic residues.

It belongs to the ZipA family. In terms of assembly, interacts with FtsZ via their C-terminal domains.

It localises to the cell inner membrane. Functionally, essential cell division protein that stabilizes the FtsZ protofilaments by cross-linking them and that serves as a cytoplasmic membrane anchor for the Z ring. Also required for the recruitment to the septal ring of downstream cell division proteins. This Shewanella putrefaciens (strain CN-32 / ATCC BAA-453) protein is Cell division protein ZipA.